The following is a 168-amino-acid chain: Siroheme decarboxylase NirH subunit (168 aa).

Belongs to the Ahb/Nir family. Probably forms a complex composed of NirD, NirL, NirG and NirH. All proteins are required for the total conversion of siroheme to didecarboxysiroheme.

It catalyses the reaction siroheme + 2 H(+) = 12,18-didecarboxysiroheme + 2 CO2. It functions in the pathway porphyrin-containing compound metabolism. In terms of biological role, involved in heme d1 biosynthesis. Catalyzes the decarboxylation of siroheme into didecarboxysiroheme. The sequence is that of Siroheme decarboxylase NirH subunit from Stutzerimonas stutzeri (Pseudomonas stutzeri).